The sequence spans 624 residues: Probable potassium transport system protein Kup 1 (624 aa).

A run of 12 helical transmembrane segments spans residues 10–30, 48–68, 94–114, 133–153, 159–179, 210–230, 242–262, 270–290, 331–351, 363–383, 388–408, and 413–433; these read LALGALGIVFGDIGTSPLYAL, LSLIFWSLIIVVSFKYLMIIF, PVFYIVAIFGAGLLLGDGMLT, LYPYVLPIASLILVLLFSLQA, IGYLFGPLILIWFITIAILGI, FLLGGIFLVVTGGEALFADIG, FFIALPCLLLNYFGQGANLIV, PFFMIAPPWFYLPLIIIATVA, IYVPQINFILFIGTMAFCLAF, IAVNLEMLLVDAMVAYAAVSI, TFNVIFLFGLFLLIDLAFLGA, and FITGGWVPIVLAFFIAFIMYS.

The protein belongs to the HAK/KUP transporter (TC 2.A.72) family.

The protein resides in the cell inner membrane. The catalysed reaction is K(+)(in) + H(+)(in) = K(+)(out) + H(+)(out). Transport of potassium into the cell. Likely operates as a K(+):H(+) symporter. This Legionella pneumophila (strain Paris) protein is Probable potassium transport system protein Kup 1.